The primary structure comprises 793 residues: E3 ubiquitin-protein ligase UHRF1 (793 aa).

The 78-residue stretch at Met1–Val78 folds into the Ubiquitin-like domain. 4 positions are modified to phosphoserine: Ser76, Ser91, Ser95, and Ser165. A disordered region spans residues Ser82 to Glu124. Tudor-like stretches follow at residues Gly133–Arg209 and Asp216–Pro283. Lys279 participates in a covalent cross-link: Glycyl lysine isopeptide (Lys-Gly) (interchain with G-Cter in SUMO2). Ser287 is modified (phosphoserine). Residues Arg296–Ser301 are linker. Ser298 bears the Phosphoserine; by PKA mark. The PHD-type zinc-finger motif lies at Asn310–Asp366. Histone H3R2me0 binding regions lie at residues Cys333–Asp337 and Pro353–Glu355. Ser368 carries the post-translational modification Phosphoserine. A Glycyl lysine isopeptide (Lys-Gly) (interchain with G-Cter in SUMO2) cross-link involves residue Lys385. An N6-acetyllysine modification is found at Lys399. The region spanning Gly419–Arg582 is the YDG domain. The interval His445–Val446 is required to promote base flipping. DNA is bound by residues Ala463–Gly464 and Asp469. Required for formation of a 5-methylcytosine-binding pocket stretches follow at residues Tyr466–Asp469 and Tyr478–Ser481. Lys546 is modified (N6-acetyllysine; alternate). Residue Lys546 forms a Glycyl lysine isopeptide (Lys-Gly) (interchain with G-Cter in SUMO2); alternate linkage. Residues Arg618 to Glu629 show a composition bias toward basic and acidic residues. The interval Arg618–Pro673 is disordered. At Ser639 the chain carries Phosphoserine; by CDK1. Position 651 is a phosphoserine (Ser651). A Glycyl lysine isopeptide (Lys-Gly) (interchain with G-Cter in SUMO2) cross-link involves residue Lys670. Residues Ser707 and Ser709 each carry the phosphoserine modification. An RING-type zinc finger spans residues Cys724–Arg763.

In terms of assembly, interacts with DNMT3A and DNMT3B. Interacts with DNMT1; the interaction is direct. Interacts with USP7; leading to its deubiquitination. Interacts with histone H3. Interacts with HDAC1, but not with HDAC2. Interacts with BLTP3A. Interacts with PML. Interacts with EHMT2. Binds hemimethylated CpG containing oligonucleotides. Interacts with ZNF263; recruited to the SIX3 promoter along with other proteins involved in chromatin modification and transcriptional corepression where it contributes to transcriptional repression. Interacts with UHRF2. Interacts with FANCD2. Interacts with TET1 isoform 2; this interaction induces the recruitment of TET1 isoform 2 to replicating heterochromatin. Phosphorylation at Ser-298 of the linker region decreases the binding to H3K9me3. Phosphorylation at Ser-639 by CDK1 during M phase impairs interaction with USP7, preventing deubiquitination and leading to degradation by the proteasome. In terms of processing, ubiquitinated; which leads to proteasomal degradation. Autoubiquitinated; interaction with USP7 leads to deubiquitination and prevents degradation. Ubiquitination and degradation takes place during M phase, when phosphorylation at Ser-639 prevents interaction with USP7 and subsequent deubiquitination. Polyubiquitination may be stimulated by DNA damage. As to expression, expressed in thymus, bone marrow, testis, lung and heart. Overexpressed in breast cancer.

It is found in the nucleus. It carries out the reaction S-ubiquitinyl-[E2 ubiquitin-conjugating enzyme]-L-cysteine + [acceptor protein]-L-lysine = [E2 ubiquitin-conjugating enzyme]-L-cysteine + N(6)-ubiquitinyl-[acceptor protein]-L-lysine.. It participates in protein modification; protein ubiquitination. Functionally, multidomain protein that acts as a key epigenetic regulator by bridging DNA methylation and chromatin modification. Specifically recognizes and binds hemimethylated DNA at replication forks via its YDG domain and recruits DNMT1 methyltransferase to ensure faithful propagation of the DNA methylation patterns through DNA replication. In addition to its role in maintenance of DNA methylation, also plays a key role in chromatin modification: through its tudor-like regions and PHD-type zinc fingers, specifically recognizes and binds histone H3 trimethylated at 'Lys-9' (H3K9me3) and unmethylated at 'Arg-2' (H3R2me0), respectively, and recruits chromatin proteins. Enriched in pericentric heterochromatin where it recruits different chromatin modifiers required for this chromatin replication. Also localizes to euchromatic regions where it negatively regulates transcription possibly by impacting DNA methylation and histone modifications. Has E3 ubiquitin-protein ligase activity by mediating the ubiquitination of target proteins such as histone H3 and PML. It is still unclear how E3 ubiquitin-protein ligase activity is related to its role in chromatin in vivo. Plays a role in DNA repair by cooperating with UHRF2 to ensure recruitment of FANCD2 to interstrand cross-links (ICLs) leading to FANCD2 activation. Acts as a critical player of proper spindle architecture by catalyzing the 'Lys-63'-linked ubiquitination of KIF11, thereby controlling KIF11 localization on the spindle. The chain is E3 ubiquitin-protein ligase UHRF1 (UHRF1) from Homo sapiens (Human).